Consider the following 429-residue polypeptide: Probable M18 family aminopeptidase 2 (429 aa).

H82, H156, and H401 together coordinate Zn(2+).

The protein belongs to the peptidase M18 family. Requires Zn(2+) as cofactor.

The chain is Probable M18 family aminopeptidase 2 from Pseudomonas fluorescens (strain SBW25).